The chain runs to 567 residues: Restriction of telomere capping protein 5 (567 aa).

One can recognise a TLDc domain in the interval Lys-289–Gly-515.

Belongs to the RTC5 family.

It localises to the cytoplasm. In terms of biological role, may be involved in a process influencing telomere capping. The protein is Restriction of telomere capping protein 5 (RTC5) of Saccharomyces cerevisiae (strain YJM789) (Baker's yeast).